Reading from the N-terminus, the 216-residue chain is Large ribosomal subunit protein uL1 (216 aa).

Belongs to the universal ribosomal protein uL1 family. In terms of assembly, part of the 50S ribosomal subunit.

Binds directly to 23S rRNA. Probably involved in E site tRNA release. Its function is as follows. Protein L1 is also a translational repressor protein, it controls the translation of its operon by binding to its mRNA. In Thermococcus kodakarensis (strain ATCC BAA-918 / JCM 12380 / KOD1) (Pyrococcus kodakaraensis (strain KOD1)), this protein is Large ribosomal subunit protein uL1.